Here is a 1391-residue protein sequence, read N- to C-terminus: DNA-directed RNA polymerase subunit beta' (1391 aa).

Zn(2+) contacts are provided by Cys-72, Cys-74, Cys-87, and Cys-90. Residues Asp-462, Asp-464, and Asp-466 each contribute to the Mg(2+) site. Zn(2+) is bound by residues Cys-816, Cys-890, Cys-897, and Cys-900.

It belongs to the RNA polymerase beta' chain family. As to quaternary structure, the RNAP catalytic core consists of 2 alpha, 1 beta, 1 beta' and 1 omega subunit. When a sigma factor is associated with the core the holoenzyme is formed, which can initiate transcription. It depends on Mg(2+) as a cofactor. Zn(2+) serves as cofactor.

The catalysed reaction is RNA(n) + a ribonucleoside 5'-triphosphate = RNA(n+1) + diphosphate. DNA-dependent RNA polymerase catalyzes the transcription of DNA into RNA using the four ribonucleoside triphosphates as substrates. This chain is DNA-directed RNA polymerase subunit beta', found in Neisseria gonorrhoeae (strain ATCC 700825 / FA 1090).